Consider the following 123-residue polypeptide: uncharacterized protein (123 aa).

Residues Met1 to Thr21 traverse the membrane as a helical segment.

It localises to the membrane. This is an uncharacterized protein from Methanocaldococcus jannaschii (strain ATCC 43067 / DSM 2661 / JAL-1 / JCM 10045 / NBRC 100440) (Methanococcus jannaschii).